Reading from the N-terminus, the 120-residue chain is Glycine cleavage system H protein (120 aa).

The 83-residue stretch at 17–99 (VATVGITAHA…MGAGWFFKLK (83 aa)) folds into the Lipoyl-binding domain. Lys-58 carries the N6-lipoyllysine modification.

It belongs to the GcvH family. As to quaternary structure, the glycine cleavage system is composed of four proteins: P, T, L and H. It depends on (R)-lipoate as a cofactor.

Functionally, the glycine cleavage system catalyzes the degradation of glycine. The H protein shuttles the methylamine group of glycine from the P protein to the T protein. This is Glycine cleavage system H protein from Rhizobium rhizogenes (strain K84 / ATCC BAA-868) (Agrobacterium radiobacter).